The primary structure comprises 175 residues: SKP1-like protein 20 (175 aa).

The segment at 117-175 (ILAANYLNIKGLLDLTCQTVADMIKGKTPEEIRKTFNIKNDFTPEEEEEVRRENQWAFE) is interaction with the F-box domain of F-box proteins.

Belongs to the SKP1 family. Part of a SCF (SKP1-CUL1-F-box protein) E3 ubiquitin-protein ligase complex. Interacts with rice black streaked dwarf virus RBSDV protein P7-2. Is able to form the SCF complex together with CUL1 and the viral P7-2 protein. Interacts with D3.

Its subcellular location is the nucleus. It participates in protein modification; protein ubiquitination. Involved in ubiquitination and subsequent proteasomal degradation of target proteins. Together with CUL1, a RING-box and a F-box protein, it forms a SCF E3 ubiquitin ligase complex. The functional specificity of this complex depends on the type of F-box protein. In the SCF complex, it serves as an adapter that links the F-box protein to CUL1. The polypeptide is SKP1-like protein 20 (Oryza sativa subsp. japonica (Rice)).